A 342-amino-acid chain; its full sequence is MITPQAALNRLIDGNELFYDEMLALMRQIMRGELSPAQTAAILIGLRVKVESVSEIAAAATVMREFATHVPVSDRRHLVDTCGTGGDKSHTFNISTTSAFVAAAAGARVAKHGGRSVSSSSGSADVLELLGVNLQLTPEQVGQCLDEIGLGFMFAPNHHSAMKHVAPIRKELGARTIFNILGPLTNPAAADHQLMGVFHPDLVGIQSRVLKMLGSRHVMIVHGCDGLDELTLSGPSMVAELKNGEILEYELEPGEFGFPLCELKDLRADTAAQSRDRLLAVLDGQPGPARDIVLLNAGAAIYTADIAPSLADGVTMAREALDSGKAKQKLQQLIALSRKLGG.

5-phospho-alpha-D-ribose 1-diphosphate-binding positions include glycine 83, 86–87 (GD), threonine 91, 93–96 (NIST), 111–119 (KHGGRSVSS), and serine 123. An anthranilate-binding site is contributed by glycine 83. Mg(2+) is bound at residue serine 95. Residue arginine 169 participates in anthranilate binding. Residues aspartate 228 and glutamate 229 each coordinate Mg(2+).

Belongs to the anthranilate phosphoribosyltransferase family. As to quaternary structure, homodimer. Mg(2+) is required as a cofactor.

The enzyme catalyses N-(5-phospho-beta-D-ribosyl)anthranilate + diphosphate = 5-phospho-alpha-D-ribose 1-diphosphate + anthranilate. It functions in the pathway amino-acid biosynthesis; L-tryptophan biosynthesis; L-tryptophan from chorismate: step 2/5. Its function is as follows. Catalyzes the transfer of the phosphoribosyl group of 5-phosphorylribose-1-pyrophosphate (PRPP) to anthranilate to yield N-(5'-phosphoribosyl)-anthranilate (PRA). The chain is Anthranilate phosphoribosyltransferase from Chromobacterium violaceum (strain ATCC 12472 / DSM 30191 / JCM 1249 / CCUG 213 / NBRC 12614 / NCIMB 9131 / NCTC 9757 / MK).